Consider the following 1276-residue polypeptide: Sterol regulatory element-binding protein cleavage-activating protein (1276 aa).

Over 1 to 18 (MTLTERLREKISQAFYNH) the chain is Cytoplasmic. Residues 19–39 (GLLCASYPIPIILFTGLCILA) traverse the membrane as a helical segment. The Lumenal portion of the chain corresponds to 40 to 279 (CCYPLLKLPL…NLVHVHFKEE (240 aa)). Residues 46 to 284 (KLPLPGTGPV…HFKEEIGIAE (239 aa)) form a loop-1 region. A disordered region spans residues 60–81 (PVKDYSPPPVDSDHKQGEPSEQ). An N-linked (GlcNAc...) asparagine glycan is attached at Asn-263. Residues 280-300 (IGIAELIPLVTTYIILFAYIY) traverse the membrane as a helical segment. In terms of domain architecture, SSD spans 284–442 (ELIPLVTTYI…MFFFTTVLSI (159 aa)). The Cytoplasmic portion of the chain corresponds to 301 to 312 (FSTRKIDMVKSK). A helical membrane pass occupies residues 313-333 (WGLALAAVVTVLSSLLMSVGL). Residues 334 to 344 (CTLFGLTPTLN) lie on the Lumenal side of the membrane. The helical transmembrane segment at 345 to 365 (GGEIFPYLVVVIGLENVLVLT) threads the bilayer. Residues 366–401 (KSVVSTPVDLEVKLRIAQGLSSESWSIMKNVATELG) are Cytoplasmic-facing. Residues 402–422 (IILIGYFTLVPAIQEFCLFAV) traverse the membrane as a helical segment. Residue Val-423 is a topological domain, lumenal. The chain crosses the membrane as a helical span at residues 424 to 444 (GLVSDFFLQMFFFTTVLSIDI). Topologically, residues 445 to 518 (RRMELADLNK…FLARTRLAQR (74 aa)) are cytoplasmic. The ER export signal motif lies at 447 to 452 (MELADL). Glycyl lysine isopeptide (Lys-Gly) (interchain with G-Cter in ubiquitin) cross-links involve residues Lys-454 and Lys-466. Residues 519 to 539 (LIMAGTVVWIGILVYTDPAGL) form a helical membrane-spanning segment. A loop-7 region spans residues 535–710 (DPAGLRTYLA…QAHGDITLYK (176 aa)). The Lumenal segment spans residues 540-708 (RTYLAAQVTE…GTQAHGDITL (169 aa)). Asn-590 and Asn-641 each carry an N-linked (GlcNAc...) asparagine glycan. Residues 709-729 (YKVAALGLAAGIVLVLLLLCL) traverse the membrane as a helical segment. At 730-1276 (YRVLCPRNYG…YVPSVLEKLD (547 aa)) the chain is on the cytoplasmic side. An interaction with SREBF2 region spans residues 731 to 1276 (RVLCPRNYGQ…YVPSVLEKLD (546 aa)). Residues 771-811 (VLRGHLMDIECLASDGMLLVSCCLAGQVCVWDAQTGDCLTR) form a WD 1 repeat. The disordered stretch occupies residues 816 to 903 (GSRRDSCGGG…RHRAGCGRAR (88 aa)). Phosphoserine occurs at positions 821, 837, 843, 850, 905, and 934. The interval 928–957 (PALRPPSPGSPLPQASQEDGAAPEKGSPPL) is disordered. 2 WD repeats span residues 949–999 (APEK…LCCS) and 1002–1039 (EVSSGITALVFLDRRIVAARLNGSLDFFSLETHTSLSP). Arg-1048 carries the omega-N-methylarginine modification. WD repeat units follow at residues 1074-1111 (AHQKPITALRAAAGRLVTGSQDHTLRVFRLEDSCCLFT), 1114-1152 (GHSGAITTVYIDQTMVLASGGQDGAICLWDVLTGSRVSH), 1155-1192 (AHRGDVTSLTCTTSCVISSGLDDLINIWDRSTGIKLYS), and 1194-1232 (QQDLGCGASLGVISDNLLVTGGQGCVSFWDLNYGDLLQT).

The protein belongs to the WD repeat SCAP family. Membrane region forms a homotetramer. Component of the SCAP-SREBP complex (composed of SCAP and SREBF1/SREBP1 or SREBF2/SREBP2); interacts with SREBF1/SREBP1 or SREBF2/SREBP2 through its C-terminal cytoplasmic domain. Forms a ternary complex with INSIG1 or INSIG2 through its transmembrane domains at high sterol concentrations. Interacts with PAQR3; the interaction anchors the SCAP-SREBP complex to the Golgi apparatus in low cholesterol conditions. Interacts with the SEC23-SEC24 complex in a SAR1-GTP-dependent manner through an ER export signal in its third cytoplasmic loop. Interacts with RNF139; the interaction inhibits the interaction of SCAP with SEC24B and hampering the ER to Golgi transport of the SCAP-SREBP complex. Interacts with SPRING. Ubiquitinated at Lys-454 and Lys-466. RNF145 triggers ubiquitination of SCAP, likely inhibiting SCAP-SREBP complex transport to the Golgi apparatus and the subsequent processing/maturation of SREBF2/SREBP2.

It localises to the endoplasmic reticulum membrane. Its subcellular location is the golgi apparatus membrane. The protein localises to the cytoplasmic vesicle. The protein resides in the COPII-coated vesicle membrane. Escort protein required for cholesterol as well as lipid homeostasis. Regulates export of the SCAP-SREBP complex from the endoplasmic reticulum to the Golgi upon low cholesterol, thereby regulating the processing of sterol regulatory element-binding proteins (SREBPs) SREBF1/SREBP1 and SREBF2/SREBP2. At high sterol concentrations, formation of a ternary complex with INSIG (INSIG1 or INSIG2) leads to mask the ER export signal in SCAP, promoting retention of the complex in the endoplasmic reticulum. Low sterol concentrations trigger release of INSIG, a conformational change in the SSD domain of SCAP, unmasking of the ER export signal, promoting recruitment into COPII-coated vesicles and transport of the SCAP-SREBP to the Golgi: in the Golgi, SREBPs are then processed, releasing the transcription factor fragment of SREBPs from the membrane, its import into the nucleus and up-regulation of LDLR, INSIG1 and the mevalonate pathway. Binds cholesterol via its SSD domain. The protein is Sterol regulatory element-binding protein cleavage-activating protein of Cricetulus griseus (Chinese hamster).